The sequence spans 677 residues: Heat shock transcription factor (677 aa).

2 disordered regions span residues M1–N56 and S115–P164. Polar residues-rich tracts occupy residues S115–T131 and Q143–P164. A DNA-binding region spans residues A193–Q297. The tract at residues E320 to V373 is involved in trimerization. Composition is skewed to low complexity over residues N400 to N416 and R457 to Q501. Disordered stretches follow at residues N400 to Q444, R457 to S541, and K606 to A677. The segment at N466 to A677 is activatory. Polar residues-rich tracts occupy residues F502–S541 and F629–P641. Over residues E650–N669 the composition is skewed to basic and acidic residues.

This sequence belongs to the HSF family. Homotrimer. Homotrimerization increases the affinity of HSF1 to DNA. In terms of processing, exhibits temperature-dependent phosphorylation.

Its subcellular location is the nucleus. Its function is as follows. DNA-binding transcription factor that specifically binds heat shock promoter elements (HSE) and activates transcription. In Kluyveromyces lactis (strain ATCC 8585 / CBS 2359 / DSM 70799 / NBRC 1267 / NRRL Y-1140 / WM37) (Yeast), this protein is Heat shock transcription factor.